Here is a 528-residue protein sequence, read N- to C-terminus: Zinc finger protein 16-like (528 aa).

A disordered region spans residues 1-28 (MSRKRNHCYMETGASSESQGAFVDSAGP). The stretch at 79–106 (IRVLKMELREKSDEIELLKAKLESAEKD) forms a coiled coil. 2 disordered regions span residues 159 to 202 (GAAE…TDAE) and 232 to 293 (FKGD…DRME). A compositionally biased stretch (basic and acidic residues) spans 232–242 (FKGDSETKCED). The span at 244–256 (PPMDEEDENEDSE) shows a compositional bias: acidic residues. 2 stretches are compositionally biased toward basic and acidic residues: residues 257 to 270 (EGRG…DHFP) and 278 to 293 (GEDR…DRME). The C2H2-type 1 zinc-finger motif lies at 303–326 (FICPFCGTLCPDSSFLEEHIKLMH). The segment covering 333-345 (QSTSAGSSSQAEG) has biased composition (low complexity). The disordered stretch occupies residues 333 to 359 (QSTSAGSSSQAEGDSGEAGPASRGARE). 4 C2H2-type zinc fingers span residues 366–388 (YECG…QRIH), 394–416 (FVCP…RLSH), 423–445 (FPCP…QRVH), and 451–473 (YACP…MRIH). The segment at 479–501 (YTCYQCGRSFRHLGTYKSHRCMP) adopts a C2H2-type 6; degenerate zinc-finger fold. The tract at residues 502-528 (ATQMPSEHSPPWAQEDKVQTGRLQGYV) is disordered.

The protein belongs to the krueppel C2H2-type zinc-finger protein family.

It is found in the nucleus. Its function is as follows. Probable transcription factor. Important for development and migration of oligodendrocyte precursor cells, and normal myelination of axons in the central nervous system (CNS). Functions autonomously in oligodendrocytes to promote CNS myelination. Seems to act in parallel with notch3 during oligodendrocyte development. This is Zinc finger protein 16-like from Danio rerio (Zebrafish).